The following is a 32-amino-acid chain: Photosystem II reaction center protein T (32 aa).

M1 bears the N-formylmethionine mark. The Lumenal portion of the chain corresponds to 1-2 (ME). The helical transmembrane segment at 3-23 (TITYVFIFACIIALFFFAIFF) threads the bilayer. The Cytoplasmic segment spans residues 24–32 (REPPRITKK).

It belongs to the PsbT family. In terms of assembly, PSII is composed of 1 copy each of membrane proteins PsbA, PsbB, PsbC, PsbD, PsbE, PsbF, PsbH, PsbI, PsbJ, PsbK, PsbL, PsbM, PsbT, PsbX, PsbY, PsbZ, Psb30/Ycf12, PsbO, CyanoQ (PsbQ), PsbU, PsbV and a large number of cofactors. It forms dimeric complexes. Part of a photosystem II (PSII) assembly intermediate complex PSII-I; crystallized from a strain deleted of psbJ, it forms monomeric PSII before addition of the oxygen evolving complex. PSII-I includes 3 assembly factors not found in mature PSII (Psb27, Psb28 and Psb34). The cofactor is PSII binds multiple chlorophylls, carotenoids and specific lipids..

The protein resides in the cellular thylakoid membrane. Its function is as follows. Found at the monomer-monomer interface of the photosystem II (PS II) dimer, plays a role in assembly and dimerization of PSII. PSII is a light-driven water plastoquinone oxidoreductase, using light energy to abstract electrons from H(2)O, generating a proton gradient subsequently used for ATP formation. This is Photosystem II reaction center protein T from Thermosynechococcus vestitus (strain NIES-2133 / IAM M-273 / BP-1).